Here is a 318-residue protein sequence, read N- to C-terminus: Ribosomal RNA small subunit methyltransferase H (318 aa).

S-adenosyl-L-methionine is bound by residues 34 to 36 (GGH), aspartate 57, leucine 91, aspartate 110, and glutamine 117.

It belongs to the methyltransferase superfamily. RsmH family.

It localises to the cytoplasm. It catalyses the reaction cytidine(1402) in 16S rRNA + S-adenosyl-L-methionine = N(4)-methylcytidine(1402) in 16S rRNA + S-adenosyl-L-homocysteine + H(+). Specifically methylates the N4 position of cytidine in position 1402 (C1402) of 16S rRNA. The protein is Ribosomal RNA small subunit methyltransferase H of Chlorobaculum parvum (strain DSM 263 / NCIMB 8327) (Chlorobium vibrioforme subsp. thiosulfatophilum).